The following is a 637-amino-acid chain: tRNA uridine 5-carboxymethylaminomethyl modification enzyme MnmG (637 aa).

FAD contacts are provided by residues 15–20 (GAGHAG), isoleucine 127, and serine 182. 276–290 (GPRYCPSIEDKIVRF) provides a ligand contact to NAD(+). Residue glutamine 373 participates in FAD binding.

This sequence belongs to the MnmG family. In terms of assembly, homodimer. Heterotetramer of two MnmE and two MnmG subunits. It depends on FAD as a cofactor.

It localises to the cytoplasm. NAD-binding protein involved in the addition of a carboxymethylaminomethyl (cmnm) group at the wobble position (U34) of certain tRNAs, forming tRNA-cmnm(5)s(2)U34. The chain is tRNA uridine 5-carboxymethylaminomethyl modification enzyme MnmG from Streptococcus pneumoniae serotype 4 (strain ATCC BAA-334 / TIGR4).